Consider the following 734-residue polypeptide: Photosystem I P700 chlorophyll a apoprotein A2 (734 aa).

The next 8 membrane-spanning stretches (helical) occupy residues 46 to 69, 135 to 158, 175 to 199, 273 to 291, 330 to 353, 369 to 395, 417 to 439, and 517 to 535; these read IFAS…FHVA, LYTG…LHLQ, LNHH…HVAI, IAHH…GHMY, IHFQ…QHMY, AALY…IFFI, AIIS…LYVH, and FLVH…LILV. 2 residues coordinate [4Fe-4S] cluster: cysteine 559 and cysteine 568. 2 helical membrane passes run 575-596 and 643-665; these read AFYL…YWHW and LSVW…MFLI. Positions 654, 662, and 670 each coordinate chlorophyll a. Position 671 (tryptophan 671) interacts with phylloquinone. A helical membrane pass occupies residues 707–727; that stretch reads LVGLAHFSVGYIFTYAAFLIA.

It belongs to the PsaA/PsaB family. As to quaternary structure, the PsaA/B heterodimer binds the P700 chlorophyll special pair and subsequent electron acceptors. PSI consists of a core antenna complex that captures photons, and an electron transfer chain that converts photonic excitation into a charge separation. The eukaryotic PSI reaction center is composed of at least 11 subunits. The cofactor is P700 is a chlorophyll a/chlorophyll a' dimer, A0 is one or more chlorophyll a, A1 is one or both phylloquinones and FX is a shared 4Fe-4S iron-sulfur center..

The protein localises to the plastid. It localises to the chloroplast thylakoid membrane. It carries out the reaction reduced [plastocyanin] + hnu + oxidized [2Fe-2S]-[ferredoxin] = oxidized [plastocyanin] + reduced [2Fe-2S]-[ferredoxin]. Its function is as follows. PsaA and PsaB bind P700, the primary electron donor of photosystem I (PSI), as well as the electron acceptors A0, A1 and FX. PSI is a plastocyanin-ferredoxin oxidoreductase, converting photonic excitation into a charge separation, which transfers an electron from the donor P700 chlorophyll pair to the spectroscopically characterized acceptors A0, A1, FX, FA and FB in turn. Oxidized P700 is reduced on the lumenal side of the thylakoid membrane by plastocyanin. This chain is Photosystem I P700 chlorophyll a apoprotein A2, found in Phaseolus vulgaris (Kidney bean).